A 539-amino-acid chain; its full sequence is Phosphoenolpyruvate carboxykinase (ATP) (539 aa).

The substrate site is built by Arg-64, Tyr-206, and Lys-212. ATP contacts are provided by residues Lys-212, His-231, and 247–255 (GLSGTGKTT). The Mn(2+) site is built by Lys-212 and His-231. Asp-268 contacts Mn(2+). Residues Glu-296, Arg-332, 448–449 (RI), and Thr-454 contribute to the ATP site. A substrate-binding site is contributed by Arg-332.

Belongs to the phosphoenolpyruvate carboxykinase (ATP) family. Monomer. Mn(2+) is required as a cofactor.

It is found in the cytoplasm. It carries out the reaction oxaloacetate + ATP = phosphoenolpyruvate + ADP + CO2. It participates in carbohydrate biosynthesis; gluconeogenesis. Its function is as follows. Involved in the gluconeogenesis. Catalyzes the conversion of oxaloacetate (OAA) to phosphoenolpyruvate (PEP) through direct phosphoryl transfer between the nucleoside triphosphate and OAA. The polypeptide is Phosphoenolpyruvate carboxykinase (ATP) (Yersinia pseudotuberculosis serotype O:1b (strain IP 31758)).